The following is a 139-amino-acid chain: Large ribosomal subunit protein uL16 (139 aa).

Basic residues predominate over residues 1–20; sequence MLIPRRVKHRKQHHPKRRGQ. The interval 1-25 is disordered; that stretch reads MLIPRRVKHRKQHHPKRRGQAKGGT.

It belongs to the universal ribosomal protein uL16 family. As to quaternary structure, part of the 50S ribosomal subunit.

Functionally, binds 23S rRNA and is also seen to make contacts with the A and possibly P site tRNAs. The protein is Large ribosomal subunit protein uL16 of Streptomyces avermitilis (strain ATCC 31267 / DSM 46492 / JCM 5070 / NBRC 14893 / NCIMB 12804 / NRRL 8165 / MA-4680).